The sequence spans 347 residues: Quinolinate synthase (347 aa).

Histidine 47 and serine 68 together coordinate iminosuccinate. A [4Fe-4S] cluster-binding site is contributed by cysteine 113. Residues 139-141 and serine 156 contribute to the iminosuccinate site; that span reads YAN. Cysteine 200 contacts [4Fe-4S] cluster. Iminosuccinate-binding positions include 226-228 and threonine 243; that span reads HPE. Cysteine 297 is a [4Fe-4S] cluster binding site.

It belongs to the quinolinate synthase family. Type 1 subfamily. [4Fe-4S] cluster serves as cofactor.

The protein localises to the cytoplasm. It catalyses the reaction iminosuccinate + dihydroxyacetone phosphate = quinolinate + phosphate + 2 H2O + H(+). It functions in the pathway cofactor biosynthesis; NAD(+) biosynthesis; quinolinate from iminoaspartate: step 1/1. Functionally, catalyzes the condensation of iminoaspartate with dihydroxyacetone phosphate to form quinolinate. This chain is Quinolinate synthase, found in Salmonella choleraesuis (strain SC-B67).